An 880-amino-acid chain; its full sequence is Valine--tRNA ligase (880 aa).

The 'HIGH' region motif lies at 51 to 61 (PNVTGELHLGH). The 'KMSKS' region motif lies at 529 to 533 (KMSKT). An ATP-binding site is contributed by K532. Residues 815-854 (MSTMVDLEVEAKRVKAEISELEIQIERLSTRLSDEQFLAK) adopt a coiled-coil conformation.

This sequence belongs to the class-I aminoacyl-tRNA synthetase family. ValS type 1 subfamily. Monomer.

The protein resides in the cytoplasm. The enzyme catalyses tRNA(Val) + L-valine + ATP = L-valyl-tRNA(Val) + AMP + diphosphate. Catalyzes the attachment of valine to tRNA(Val). As ValRS can inadvertently accommodate and process structurally similar amino acids such as threonine, to avoid such errors, it has a 'posttransfer' editing activity that hydrolyzes mischarged Thr-tRNA(Val) in a tRNA-dependent manner. This chain is Valine--tRNA ligase, found in Dehalococcoides mccartyi (strain CBDB1).